The chain runs to 241 residues: Ribonuclease PH (241 aa).

Phosphate is bound by residues Arg87 and 125–127 (GTR).

It belongs to the RNase PH family. In terms of assembly, homohexameric ring arranged as a trimer of dimers.

It carries out the reaction tRNA(n+1) + phosphate = tRNA(n) + a ribonucleoside 5'-diphosphate. Functionally, phosphorolytic 3'-5' exoribonuclease that plays an important role in tRNA 3'-end maturation. Removes nucleotide residues following the 3'-CCA terminus of tRNAs; can also add nucleotides to the ends of RNA molecules by using nucleoside diphosphates as substrates, but this may not be physiologically important. Probably plays a role in initiation of 16S rRNA degradation (leading to ribosome degradation) during starvation. The sequence is that of Ribonuclease PH from Salinispora tropica (strain ATCC BAA-916 / DSM 44818 / JCM 13857 / NBRC 105044 / CNB-440).